Here is a 447-residue protein sequence, read N- to C-terminus: Alkylglycerol monooxygenase (447 aa).

Helical transmembrane passes span 43-63 (ATPF…ILKG) and 111-131 (WDSP…YYWF). The Fatty acid hydroxylase domain maps to 118–249 (YLTFLGVDFG…LIIWDRIFGT (132 aa)). Positions 132–136 (HRMAH) match the Histidine box-1 motif. A Histidine box-2 motif is present at residues 145–149 (HQAHH). Residues 170–190 (SWVFYCPLALFVPPSVFAVHI) traverse the membrane as a helical segment. The short motif at 221–225 (HRVHH) is the Histidine box-3 element. Helical transmembrane passes span 334-354 (FLKI…EETF), 363-383 (VTIL…GFLL), and 413-433 (IESL…FWGV).

The protein belongs to the sterol desaturase family. TMEM195 subfamily. The cofactor is Fe cation.

Its subcellular location is the endoplasmic reticulum membrane. The catalysed reaction is 1-O-(1,2-saturated-alkyl)-sn-glycerol + (6R)-L-erythro-5,6,7,8-tetrahydrobiopterin + O2 = a 1-(1-hydroxyalkyl)-sn-glycerol + (6R)-L-erythro-6,7-dihydrobiopterin + H2O. Glyceryl-ether monooxygenase that cleaves the O-alkyl bond of ether lipids. Ether lipids are essential components of brain membranes. In Rattus norvegicus (Rat), this protein is Alkylglycerol monooxygenase (Agmo).